The chain runs to 1832 residues: Zinc finger SWIM domain-containing protein 8 (1832 aa).

3 positions are modified to phosphoserine: Ser36, Ser48, and Ser53. The segment at 45 to 67 (RKQSAGPNSPTGGGGGGGSGGTR) is disordered. Over residues 55 to 65 (TGGGGGGGSGG) the composition is skewed to gly residues. The SWIM-type zinc-finger motif lies at 172–208 (YNVAVMFDRCRVTSCSCTCGAGAKWCTHVVALCLFRI). A phosphoserine mark is found at Ser437 and Ser564. Disordered regions lie at residues 516–722 (PGAS…VGEE), 800–821 (NPPD…VSTS), and 1018–1216 (SQTH…TVDV). Basic and acidic residues predominate over residues 563 to 572 (LSAEGGDKAL). A compositionally biased stretch (polar residues) spans 1021–1042 (HKPQTLSSFYSSSRPATANQRS). The segment covering 1121-1132 (SRGGYNGRGWGS) has biased composition (gly residues). Thr1141 carries the post-translational modification Phosphothreonine. Over residues 1146–1161 (IDSSAPETTSDSSPTL) the composition is skewed to polar residues. Phosphoserine occurs at positions 1155, 1158, and 1162. The span at 1176 to 1211 (GRGQDSDSISSSSSDSLGSSSSSGSRRASASGGARA) shows a compositional bias: low complexity. Ser1270 carries the phosphoserine modification. The segment covering 1435-1446 (STAREGATSCSG) has biased composition (polar residues). A disordered region spans residues 1435-1465 (STAREGATSCSGSGMRAAGEAGRGLPEGRGA). Residues 1455-1465 (AGRGLPEGRGA) show a composition bias toward gly residues. The residue at position 1831 (Ser1831) is a Phosphoserine.

It belongs to the ZSWIM8 family. As to quaternary structure, component of the SCF-like E3 ubiquitin-protein ligase complex which contains CUL3, RBX1, ELOB, ELOC and ZSWIM8. Interacts with DAB1.

It is found in the cytoplasm. The protein localises to the cytosol. It participates in protein modification; protein ubiquitination. In terms of biological role, substrate recognition component of a SCF-like E3 ubiquitin-protein ligase complex that promotes target-directed microRNA degradation (TDMD), a process that mediates degradation of microRNAs (miRNAs). The SCF-like E3 ubiquitin-protein ligase complex acts by catalyzing ubiquitination and subsequent degradation of AGO proteins (AGO1, AGO2, AGO3 and/or AGO4), thereby exposing miRNAs for degradation. Specifically recognizes and binds AGO proteins when they are engaged with a TDMD target. May also acts as a regulator of axon guidance: specifically recognizes misfolded ROBO3 and promotes its ubiquitination and subsequent degradation. Plays an essential role for proper embryonic development of heart and lung. Controls protein quality of DAB1, a key signal molecule for brain development, thus protecting its signaling strength. Mechanistically, recognizes intrinsically disordered regions of DAB1 and eliminates misfolded DAB1 that cannot be properly phosphorylated. This chain is Zinc finger SWIM domain-containing protein 8, found in Mus musculus (Mouse).